Reading from the N-terminus, the 1097-residue chain is Protein toll (1097 aa).

Positions 1-27 (MSRLKAASELALLVIILQLLQWPGSEA) are cleaved as a signal peptide. Over 28-807 (SFGRDACSEM…ICPAEKGVFI (780 aa)) the chain is Extracellular. 3 disulfide bridges follow: cysteine 34–cysteine 45, cysteine 43–cysteine 56, and cysteine 79–cysteine 107. Asparagine 80, asparagine 140, and asparagine 175 each carry an N-linked (GlcNAc...) asparagine glycan. 15 LRR repeats span residues 175–195 (NLSH…LFDD), 198–219 (NLES…IFGK), 222–243 (KLKQ…DFEG), 246–267 (SVLG…VFAH), 270–291 (NVTD…LFDH), 294–314 (HLNE…PSRL), 320–340 (ELQI…LFEH), 343–364 (QITN…LLEH), 367–388 (NLLS…LFAH), 391–412 (NLTD…IFSN), 415–436 (NLVT…AFVS), 439–460 (GLRH…LDIM), 474–495 (GLLT…WKNT), 498–521 (QLRE…AFLS), and 523–544 (NRLH…EDVH). Asparagine 235 is a glycosylation site (N-linked (GlcNAc...) asparagine). Asparagine 270 and asparagine 275 each carry an N-linked (GlcNAc...) asparagine glycan. Asparagine 346 carries an N-linked (GlcNAc...) asparagine glycan. N-linked (GlcNAc...) asparagine glycosylation is present at asparagine 391. 3 N-linked (GlcNAc...) asparagine glycosylation sites follow: asparagine 482, asparagine 508, and asparagine 528. The LRRCT 1 domain maps to 561 to 620 (NPLVCDCTILWFIQLVRGVHKPQYSRQFKLRTDRLVCSQPNVLEGTPVRQIEPQTLICPL). 4 disulfide bridges follow: cysteine 565–cysteine 597, cysteine 567–cysteine 618, cysteine 631–cysteine 637, and cysteine 635–cysteine 650. The 42-residue stretch at 622-663 (FSDDPRERKCPRGCNCHVRTYDKALVINCHSGNLTHVPRLPN) folds into the LRRNT domain. Residues asparagine 654, asparagine 677, asparagine 703, asparagine 715, asparagine 730, and asparagine 738 are each glycosylated (N-linked (GlcNAc...) asparagine). 3 LRR repeats span residues 669–690 (QLME…NTPG), 693–713 (SVTS…DQLP), and 715–738 (NLTH…GFLN). In terms of domain architecture, LRRCT 2 spans 751–801 (NPWMCDCTAKPLLLFTQDNFERIGDRNEMMCVNAEMPTRMVELSTNDICPA). 2 disulfides stabilise this stretch: cysteine 755–cysteine 781 and cysteine 757–cysteine 799. The chain crosses the membrane as a helical span at residues 808–828 (ALAVVIALTGLLAGFTAALYY). The Cytoplasmic portion of the chain corresponds to 829–1097 (KFQTEIKIWL…INTNAKQSDV (269 aa)). In terms of domain architecture, TIR spans 857–993 (KKFDAFISYS…WFWDKLRFAL (137 aa)).

Belongs to the Toll-like receptor family. In terms of assembly, in the absence of ligand, forms a low-affinity disulfide-linked homodimer. In the presence of ligand, crystal structures show one Tl molecule bound to a spaetzle C-106 homodimer. However, the active complex probably consists of two Tl molecules bound to a spaetzle C-106 homodimer. This is supported by in vitro experiments which also show binding of the spaetzle C-106 dimer to 2 Tl receptors. Ligand binding induces conformational changes in the extracellular domain of Tl. This may enable a secondary homodimerization interface at the C-terminus of the Tl extracellular domain. As to expression, in early embryos, concentrated in the pseudocleavage furrows that form transiently between nuclei before cellularization and in the cleavage furrows during cellularization (at protein level). Later, found on cells in the mesectoderm, stomodeum, proctodeum, anterior and posterior midguts, splanchnopleura, salivary gland placode and adjacent to the segmentally repeated tracheal placodes (at protein level). During and after germ band shortening, localized in a number of cell types, including the salivary gland, foregut, hindgut, Malpighian tubules and epidermis (at protein level). In embryos, high expression in M13 with comparatively low expression in M12.

It is found in the cell membrane. Its subcellular location is the cytoplasm. Functionally, receptor for the cleaved activated form of spz, spaetzle C-106. Binding to spaetzle C-106 activates the Toll signaling pathway and induces expression of the antifungal peptide drosomycin. Component of the extracellular signaling pathway that establishes dorsal-ventral polarity in the embryo. Promotes heterophilic cellular adhesion. Involved in synaptic targeting of motoneurons RP5 and V to muscle 12 (M12); functions as a repulsive cue inhibiting motoneuron synapse formation on muscle 13 (M13) to guide RP5 and V to the neighboring M12, where its expression is repressed by tey. May also function in embryonic neuronal survival and the synaptic targeting of SNa motoneurons. This is Protein toll from Drosophila melanogaster (Fruit fly).